A 344-amino-acid polypeptide reads, in one-letter code: L-rhamnose-proton symporter (344 aa).

Transmembrane regions (helical) follow at residues 4-24, 38-58, 68-88, 101-121, 137-157, 175-195, 214-234, 259-279, 290-310, and 323-343; these read AITMGIFWHLIGAASAACFYA, WSVGGIVSWIILPWAISALLL, FSLSTLLPVFLFGAMWGIGNI, MGIGIAIGITLIVGTLMTPII, TLLGVLVALIGVGIVTRAGQL, LVLAVMCGIFSAGMSFAMNAA, LPSYVVIMGGGAIINLGFCFI, VLLSALGGLMWYLQFFFYAWG, ISWMLHMSFYVLCGGIVGLVL, and VLSLGCVVIIVAANIVGIGMA.

This sequence belongs to the L-rhamnose transporter (TC 2.A.7.6) family.

Its subcellular location is the cell inner membrane. The catalysed reaction is L-rhamnopyranose(in) + H(+)(in) = L-rhamnopyranose(out) + H(+)(out). Its function is as follows. Uptake of L-rhamnose across the cytoplasmic membrane with the concomitant transport of protons into the cell (symport system). The sequence is that of L-rhamnose-proton symporter from Escherichia coli O127:H6 (strain E2348/69 / EPEC).